The chain runs to 432 residues: 3-phosphoshikimate 1-carboxyvinyltransferase (432 aa).

Residues K23, S24, and R28 each coordinate 3-phosphoshikimate. K23 contributes to the phosphoenolpyruvate binding site. Phosphoenolpyruvate is bound by residues G95 and R123. 3-phosphoshikimate is bound by residues S167, Q169, D317, and K344. Q169 is a binding site for phosphoenolpyruvate. D317 functions as the Proton acceptor in the catalytic mechanism. R348 and R390 together coordinate phosphoenolpyruvate.

It belongs to the EPSP synthase family. As to quaternary structure, monomer.

The protein localises to the cytoplasm. The enzyme catalyses 3-phosphoshikimate + phosphoenolpyruvate = 5-O-(1-carboxyvinyl)-3-phosphoshikimate + phosphate. Its pathway is metabolic intermediate biosynthesis; chorismate biosynthesis; chorismate from D-erythrose 4-phosphate and phosphoenolpyruvate: step 6/7. Its function is as follows. Catalyzes the transfer of the enolpyruvyl moiety of phosphoenolpyruvate (PEP) to the 5-hydroxyl of shikimate-3-phosphate (S3P) to produce enolpyruvyl shikimate-3-phosphate and inorganic phosphate. This Staphylococcus aureus (strain bovine RF122 / ET3-1) protein is 3-phosphoshikimate 1-carboxyvinyltransferase.